The following is a 318-amino-acid chain: Protein-methionine-sulfoxide reductase catalytic subunit MsrP (318 aa).

The tat-type signal signal peptide spans 1–40 (MKQLMMSDVTPEEIFNQRRQIIKSMGLGIATLGLPNIAFA). Residues Asn72, 75–76 (YE), Cys130, Thr165, Asn217, Arg222, and 233–235 (SIK) each bind Mo-molybdopterin.

The protein belongs to the MsrP family. In terms of assembly, heterodimer of a catalytic subunit (MsrP) and a heme-binding subunit (MsrQ). Requires Mo-molybdopterin as cofactor. Post-translationally, predicted to be exported by the Tat system. The position of the signal peptide cleavage has not been experimentally proven.

It localises to the periplasm. It catalyses the reaction L-methionyl-[protein] + a quinone + H2O = L-methionyl-(S)-S-oxide-[protein] + a quinol. The catalysed reaction is L-methionyl-[protein] + a quinone + H2O = L-methionyl-(R)-S-oxide-[protein] + a quinol. Its function is as follows. Part of the MsrPQ system that repairs oxidized periplasmic proteins containing methionine sulfoxide residues (Met-O), using respiratory chain electrons. Thus protects these proteins from oxidative-stress damage caused by reactive species of oxygen and chlorine generated by the host defense mechanisms. MsrPQ is essential for the maintenance of envelope integrity under bleach stress, rescuing a wide series of structurally unrelated periplasmic proteins from methionine oxidation. The catalytic subunit MsrP is non-stereospecific, being able to reduce both (R-) and (S-) diastereoisomers of methionine sulfoxide. The chain is Protein-methionine-sulfoxide reductase catalytic subunit MsrP from Haemophilus ducreyi (strain 35000HP / ATCC 700724).